We begin with the raw amino-acid sequence, 412 residues long: 8-amino-7-oxononanoate synthase (412 aa).

Residue Arg28 participates in substrate binding. 115–116 is a binding site for pyridoxal 5'-phosphate; sequence GY. His140 is a binding site for substrate. Residues Ser186, His214, and Thr246 each coordinate pyridoxal 5'-phosphate. Position 249 is an N6-(pyridoxal phosphate)lysine (Lys249). Position 367 (Thr367) interacts with substrate.

This sequence belongs to the class-II pyridoxal-phosphate-dependent aminotransferase family. BioF subfamily. In terms of assembly, homodimer. Requires pyridoxal 5'-phosphate as cofactor.

The catalysed reaction is 6-carboxyhexanoyl-[ACP] + L-alanine + H(+) = (8S)-8-amino-7-oxononanoate + holo-[ACP] + CO2. Its pathway is cofactor biosynthesis; biotin biosynthesis. Its function is as follows. Catalyzes the decarboxylative condensation of pimeloyl-[acyl-carrier protein] and L-alanine to produce 8-amino-7-oxononanoate (AON), [acyl-carrier protein], and carbon dioxide. The protein is 8-amino-7-oxononanoate synthase of Paracidovorax citrulli (strain AAC00-1) (Acidovorax citrulli).